A 172-amino-acid chain; its full sequence is Neuropeptide-like protein nlp-8 (172 aa).

Positions 1-26 (MSQKLLPISPLQLLFLQCLLIGFTAA) are cleaved as a signal peptide.

May be processed by convertase egl-3.

It localises to the secreted. In terms of biological role, neuropeptide-like protein. Plays a role in behaviors associated with a sleep-like state induced by stress (SIS), acting in concert with the FARP (FMRFamide related) peptides, flp-13 and flp-24. The sequence is that of Neuropeptide-like protein nlp-8 from Caenorhabditis elegans.